Reading from the N-terminus, the 92-residue chain is MARSVWKGPFVDGYLLKKAEKVRESGRSEVIKMWTRRSTILPQFVGLTFGVYNGSKHIPVSVNEDMVGHKFGEFAPTRTYYGHGADKKAKRK.

This sequence belongs to the universal ribosomal protein uS19 family.

Its function is as follows. Protein S19 forms a complex with S13 that binds strongly to the 16S ribosomal RNA. The protein is Small ribosomal subunit protein uS19 of Allorhizobium ampelinum (strain ATCC BAA-846 / DSM 112012 / S4) (Agrobacterium vitis (strain S4)).